The primary structure comprises 390 residues: 2-oxoisovalerate dehydrogenase subunit beta, mitochondrial (390 aa).

Residues 1–48 constitute a mitochondrion transit peptide; it reads MAAVAARAGGLLWLRAAGAERRRCGLRCAALVQGFLQPGGEDTAQKRR. Thiamine diphosphate is bound at residue Tyr-150. Residues Gly-176, Leu-178, Thr-179, Cys-226, and Asp-229 each coordinate K(+). Lys-230 is subject to N6-acetyllysine. Asn-231 contributes to the K(+) binding site. Lys-239 bears the N6-acetyllysine mark.

As to quaternary structure, heterotetramer of 2 alpha/BCKDHA and 2 beta chains/BCKDHB that forms the branched-chain alpha-keto acid decarboxylase (E1) component of the BCKD complex. The branched-chain alpha-ketoacid dehydrogenase is a large complex composed of three major building blocks E1, E2 and E3. It is organized around E2, a 24-meric cubic core composed of DBT, to which are associated 6 to 12 copies of E1, and approximately 6 copies of the dehydrogenase E3, a DLD dimer. Thiamine diphosphate is required as a cofactor.

Its subcellular location is the mitochondrion matrix. The enzyme catalyses N(6)-[(R)-lipoyl]-L-lysyl-[protein] + 3-methyl-2-oxobutanoate + H(+) = N(6)-[(R)-S(8)-2-methylpropanoyldihydrolipoyl]-L-lysyl-[protein] + CO2. Its function is as follows. Together with BCKDHA forms the heterotetrameric E1 subunit of the mitochondrial branched-chain alpha-ketoacid dehydrogenase (BCKD) complex. The BCKD complex catalyzes the multi-step oxidative decarboxylation of alpha-ketoacids derived from the branched-chain amino-acids valine, leucine and isoleucine producing CO2 and acyl-CoA which is subsequently utilized to produce energy. The E1 subunit catalyzes the first step with the decarboxylation of the alpha-ketoacid forming an enzyme-product intermediate. A reductive acylation mediated by the lipoylamide cofactor of E2 extracts the acyl group from the E1 active site for the next step of the reaction. In Mus musculus (Mouse), this protein is 2-oxoisovalerate dehydrogenase subunit beta, mitochondrial.